Here is a 184-residue protein sequence, read N- to C-terminus: dITP/XTP pyrophosphatase (184 aa).

Residue 8–13 (TGNKGK) participates in substrate binding. 2 residues coordinate Mg(2+): Glu37 and Asp66. Asp66 functions as the Proton acceptor in the catalytic mechanism. Residues Ser67, 142–145 (FGYD), Lys163, and 168–169 (HR) each bind substrate.

The protein belongs to the HAM1 NTPase family. In terms of assembly, homodimer. The cofactor is Mg(2+).

It carries out the reaction XTP + H2O = XMP + diphosphate + H(+). It catalyses the reaction dITP + H2O = dIMP + diphosphate + H(+). The enzyme catalyses ITP + H2O = IMP + diphosphate + H(+). Pyrophosphatase that catalyzes the hydrolysis of nucleoside triphosphates to their monophosphate derivatives, with a high preference for the non-canonical purine nucleotides XTP (xanthosine triphosphate), dITP (deoxyinosine triphosphate) and ITP. Seems to function as a house-cleaning enzyme that removes non-canonical purine nucleotides from the nucleotide pool, thus preventing their incorporation into DNA/RNA and avoiding chromosomal lesions. The chain is dITP/XTP pyrophosphatase from Methanosarcina acetivorans (strain ATCC 35395 / DSM 2834 / JCM 12185 / C2A).